A 403-amino-acid chain; its full sequence is Na(+)-translocating NADH-quinone reductase subunit B (403 aa).

Helical transmembrane passes span 56–76 (MMIT…WNTG), 121–141 (AYFL…EVLF), 163–183 (ILPP…GVVI), 220–240 (WTAV…AGGI), 258–278 (IHGS…AVLI), 287–307 (IVTG…LIGS), 312–332 (LFGM…GMIF), 348–368 (WVFG…NPAF), and 371–391 (GMML…HFVI). Position 230 is an FMN phosphoryl threonine (Thr-230).

This sequence belongs to the NqrB/RnfD family. In terms of assembly, composed of six subunits; NqrA, NqrB, NqrC, NqrD, NqrE and NqrF. FMN serves as cofactor.

It is found in the cell inner membrane. It carries out the reaction a ubiquinone + n Na(+)(in) + NADH + H(+) = a ubiquinol + n Na(+)(out) + NAD(+). Functionally, NQR complex catalyzes the reduction of ubiquinone-1 to ubiquinol by two successive reactions, coupled with the transport of Na(+) ions from the cytoplasm to the periplasm. NqrA to NqrE are probably involved in the second step, the conversion of ubisemiquinone to ubiquinol. The chain is Na(+)-translocating NADH-quinone reductase subunit B from Stutzerimonas stutzeri (strain A1501) (Pseudomonas stutzeri).